The sequence spans 217 residues: Proteasome subunit beta type-6-A like protein (217 aa).

A propeptide spans M1–G16 (removed in mature form). T17 functions as the Nucleophile in the catalytic mechanism.

This sequence belongs to the peptidase T1B family. In terms of assembly, the 26S proteasome consists of a 20S proteasome core and two 19S regulatory subunits. The 20S proteasome core is composed of 28 subunits that are arranged in four stacked rings, resulting in a barrel-shaped structure. The two end rings are each formed by seven alpha subunits, and the two central rings are each formed by seven beta subunits. The catalytic chamber with the active sites is on the inside of the barrel.

It is found in the cytoplasm. It localises to the nucleus. The enzyme catalyses Cleavage of peptide bonds with very broad specificity.. Its function is as follows. The proteasome is a multicatalytic proteinase complex which is characterized by its ability to cleave peptides with Arg, Phe, Tyr, Leu, and Glu adjacent to the leaving group at neutral or slightly basic pH. The proteasome has an ATP-dependent proteolytic activity. This subunit is involved in antigen processing to generate class I binding peptides. The chain is Proteasome subunit beta type-6-A like protein (psmb6l-a) from Salmo salar (Atlantic salmon).